The sequence spans 345 residues: MNSKLFSPYTIKNVTLKNRIVMSPMCMYSSGNEDGSVTNFHLIHYGTRAAGQVGLVMVEATAVLAEGRISNKDLGIWDDNLIEGLHKTTTFIHDNGAKAAIQLAHAGRKAELDTNAFAPSAIPFNDKMKIPVEMNIQQIKETILAFQRAALRSKQAGFDVIELHGAHGYLINEFLSPLTNKRTDKYGGSPENRYRFLREIIDSVNEVWDGPIFVRISANDYHPDGLTVQDYVQYTKWMKEQGIDLIDCSSGAVVPAHIDVYPGYQVQYAKHIKEHTKIATGAVGLITTGSQAEQILNNNEADLIFIGRELLRNPYFPRIAANELGFELQEPYQYKRAPGKIHTNK.

Residue 23–26 (SPMC) participates in FMN binding. Tyrosine 28 serves as a coordination point for substrate. Residues alanine 60 and glutamine 102 each coordinate FMN. A substrate-binding site is contributed by 164 to 167 (HGAH). Residues arginine 215 and 307-308 (GR) each bind FMN.

Belongs to the NADH:flavin oxidoreductase/NADH oxidase family. NamA subfamily. As to quaternary structure, homotetramer. FMN serves as cofactor.

The catalysed reaction is A + NADPH + H(+) = AH2 + NADP(+). Its function is as follows. Catalyzes the reduction of the double bond of an array of alpha,beta-unsaturated aldehydes and ketones. It also reduces the nitro group of nitroester and nitroaromatic compounds. It could have a role in detoxification processes. The sequence is that of NADPH dehydrogenase from Bacillus cereus (strain B4264).